Consider the following 208-residue polypeptide: Urease accessory protein UreG 1 (208 aa).

14–21 (GPVGSGKT) provides a ligand contact to GTP.

It belongs to the SIMIBI class G3E GTPase family. UreG subfamily. In terms of assembly, homodimer. UreD, UreF and UreG form a complex that acts as a GTP-hydrolysis-dependent molecular chaperone, activating the urease apoprotein by helping to assemble the nickel containing metallocenter of UreC. The UreE protein probably delivers the nickel.

The protein localises to the cytoplasm. In terms of biological role, facilitates the functional incorporation of the urease nickel metallocenter. This process requires GTP hydrolysis, probably effectuated by UreG. Functionally, disruption of the ure1 gene cluster suggests that it protects brucellae during their passage through the stomach. The major route of infection in human brucellosis is oral. This is Urease accessory protein UreG 1 from Brucella abortus (strain 2308).